The sequence spans 433 residues: GTPase Obg (433 aa).

Positions 1–159 constitute an Obg domain; that stretch reads MAITDYCECR…LNVSLEVKYL (159 aa). An OBG-type G domain is found at 160–329; it reads ANVGIVGFPN…LLDRVFELYN (170 aa). GTP contacts are provided by residues 166–173, 191–195, 212–215, 282–285, and 310–312; these read GFPNSGKS, FTTLI, DIPG, NKID, and ISA. The Mg(2+) site is built by S173 and T193. One can recognise an OCT domain in the interval 355-433; it reads TNENNNDPLN…FDGCEFVIND (79 aa).

The protein belongs to the TRAFAC class OBG-HflX-like GTPase superfamily. OBG GTPase family. In terms of assembly, monomer. Mg(2+) serves as cofactor.

It localises to the cytoplasm. An essential GTPase which binds GTP, GDP and possibly (p)ppGpp with moderate affinity, with high nucleotide exchange rates and a fairly low GTP hydrolysis rate. Plays a role in control of the cell cycle, stress response, ribosome biogenesis and in those bacteria that undergo differentiation, in morphogenesis control. The sequence is that of GTPase Obg from Mycoplasma genitalium (strain ATCC 33530 / DSM 19775 / NCTC 10195 / G37) (Mycoplasmoides genitalium).